The chain runs to 148 residues: Tetratricopeptide repeat protein 32 (148 aa).

TPR repeat units lie at residues 12–45 (SSAA…CARH), 55–88 (ATAY…LPSF), and 89–122 (EVPY…NPGF).

This chain is Tetratricopeptide repeat protein 32 (Ttc32), found in Mus musculus (Mouse).